The following is a 122-amino-acid chain: Small ribosomal subunit protein uS13 (122 aa).

The segment at 93-122 is disordered; sequence RRGLPVRGQRTKTNARTRKGPKKTIAGKKK.

The protein belongs to the universal ribosomal protein uS13 family. As to quaternary structure, part of the 30S ribosomal subunit. Forms a loose heterodimer with protein S19. Forms two bridges to the 50S subunit in the 70S ribosome.

Its function is as follows. Located at the top of the head of the 30S subunit, it contacts several helices of the 16S rRNA. In the 70S ribosome it contacts the 23S rRNA (bridge B1a) and protein L5 of the 50S subunit (bridge B1b), connecting the 2 subunits; these bridges are implicated in subunit movement. Contacts the tRNAs in the A and P-sites. This Corynebacterium kroppenstedtii (strain DSM 44385 / JCM 11950 / CIP 105744 / CCUG 35717) protein is Small ribosomal subunit protein uS13.